The chain runs to 400 residues: Elongation factor Tu (400 aa).

A tr-type G domain is found at 10–208 (KPHVNVGTIG…AMDNYIPEPQ (199 aa)). A G1 region spans residues 19 to 26 (GHIDHGKS). 19–26 (GHIDHGKS) is a GTP binding site. S26 serves as a coordination point for Mg(2+). The G2 stretch occupies residues 60-64 (GITIN). The interval 81–84 (DCPG) is G3. GTP contacts are provided by residues 81–85 (DCPGH) and 136–139 (NKTD). Positions 136 to 139 (NKTD) are G4. A G5 region spans residues 174-176 (SAL).

The protein belongs to the TRAFAC class translation factor GTPase superfamily. Classic translation factor GTPase family. EF-Tu/EF-1A subfamily. Monomer.

The protein localises to the cytoplasm. The enzyme catalyses GTP + H2O = GDP + phosphate + H(+). GTP hydrolase that promotes the GTP-dependent binding of aminoacyl-tRNA to the A-site of ribosomes during protein biosynthesis. The sequence is that of Elongation factor Tu from Thermotoga petrophila (strain ATCC BAA-488 / DSM 13995 / JCM 10881 / RKU-1).